The primary structure comprises 440 residues: Putative postmeiotic segregation increased 2-like protein 1 (440 aa).

Residues 164–178 (RVEHNVESSRWEPRR) are compositionally biased toward basic and acidic residues. Residues 164-215 (RVEHNVESSRWEPRRRGACGSRGGNFPSPRGGSGVASLERAESSSTEPAKAI) are disordered. One can recognise a Histidine kinase domain in the interval 230–364 (PVVPSLSTAV…MTVSVKQLFS (135 aa)).

Belongs to the DNA mismatch repair MutL/HexB family. Highly expressed in kidney, spleen, adrenal gland, ovary and cerebellum and to a lower extent in liver, esophagus, stomach, duodenum, colon, bladder, uterus, lung, pancreas and cerebrum. Not expressed in heart.

The protein is Putative postmeiotic segregation increased 2-like protein 1 (PMS2P1) of Homo sapiens (Human).